A 378-amino-acid polypeptide reads, in one-letter code: Decaprenyl-diphosphate synthase subunit 1 (378 aa).

Residues Lys-72, Arg-75, and His-130 each coordinate isopentenyl diphosphate. Mg(2+) contacts are provided by Asp-137 and Asp-141. Arg-147 contributes to the isopentenyl diphosphate binding site.

It belongs to the FPP/GGPP synthase family. In terms of assembly, heterotetramer of 2 dps1 and 2 dlp1 subunits. Requires Mg(2+) as cofactor.

Its subcellular location is the mitochondrion. It catalyses the reaction 7 isopentenyl diphosphate + (2E,6E)-farnesyl diphosphate = all-trans-decaprenyl diphosphate + 7 diphosphate. It functions in the pathway cofactor biosynthesis; ubiquinone biosynthesis. In terms of biological role, supplies decaprenyl diphosphate, the precursor for the side chain of the isoprenoid quinones ubiquinone-10. The sequence is that of Decaprenyl-diphosphate synthase subunit 1 (dps1) from Schizosaccharomyces pombe (strain 972 / ATCC 24843) (Fission yeast).